We begin with the raw amino-acid sequence, 386 residues long: Succinate--CoA ligase [ADP-forming] subunit beta (386 aa).

An ATP-grasp domain is found at 9-244 (KEILRKYGVP…HDEEDPLETR (236 aa)). Residues Lys-46, 53-55 (GRG), Glu-99, Cys-102, and Glu-107 contribute to the ATP site. Positions 199 and 213 each coordinate Mg(2+). Substrate contacts are provided by residues Asn-264 and 321 to 323 (GIM).

The protein belongs to the succinate/malate CoA ligase beta subunit family. In terms of assembly, heterotetramer of two alpha and two beta subunits. The cofactor is Mg(2+).

The catalysed reaction is succinate + ATP + CoA = succinyl-CoA + ADP + phosphate. It catalyses the reaction GTP + succinate + CoA = succinyl-CoA + GDP + phosphate. It participates in carbohydrate metabolism; tricarboxylic acid cycle; succinate from succinyl-CoA (ligase route): step 1/1. In terms of biological role, succinyl-CoA synthetase functions in the citric acid cycle (TCA), coupling the hydrolysis of succinyl-CoA to the synthesis of either ATP or GTP and thus represents the only step of substrate-level phosphorylation in the TCA. The beta subunit provides nucleotide specificity of the enzyme and binds the substrate succinate, while the binding sites for coenzyme A and phosphate are found in the alpha subunit. The sequence is that of Succinate--CoA ligase [ADP-forming] subunit beta from Rickettsia felis (strain ATCC VR-1525 / URRWXCal2) (Rickettsia azadi).